A 193-amino-acid polypeptide reads, in one-letter code: Transcriptional regulator RamR (193 aa).

Positions 7–66 (EDKKQALLEAATQAIAQSGIAASTAVIARNAGVAEGTLFRYFATKDELINTLYLHLKQDL) constitute an HTH tetR-type domain. The H-T-H motif DNA-binding region spans 29-48 (STAVIARNAGVAEGTLFRYF).

In terms of assembly, homodimer. May bind DNA either as a homodimer or as a pair of homodimers. Various chemicals reduce DNA-binding in vitro, including bile acids, such as cholic and chenodeoxycholic acids, and antimicrobial drugs, such as berberine, crystal violet, dequalinium, ethidium bromide and rhodamine 6G. Binds small regulatory RNA StyR3.

Functionally, transcriptional regulator. Represses the transcription of the transcriptional activator RamA and, thereby, leads to repression of the expression of the efflux pump subunits AcrA and AcrB, and TolC. Acts by binding directly to the promoter region of the ramA gene. Promoter binding may be inhibited partially by the small regulatory RNA StyR3, perhaps thereby ensuring a basal level of expression of RamA. The polypeptide is Transcriptional regulator RamR (Salmonella typhimurium (strain LT2 / SGSC1412 / ATCC 700720)).